Reading from the N-terminus, the 102-residue chain is Protamine-2 (102 aa).

Serine 8, serine 10, and serine 37 each carry phosphoserine. A disordered region spans residues 16-102 (VYGQQLRGQE…RTRRRRCRRH (87 aa)). Over residues 49-102 (GHSHYRRRHCSRRRLHRIHRQQHRSCGRRRRRSCRQRRRHRRGCRTRRRRCRRH) the composition is skewed to basic residues.

It belongs to the protamine P2 family. Interacts with TDRP. Post-translationally, proteolytic processing into mature chains is required for histone eviction during spermatogenesis. Transition proteins (TNP1 and TNP2) are required for processing. As to expression, testis.

The protein resides in the nucleus. Its subcellular location is the chromosome. Protamines substitute for histones in the chromatin of sperm during the haploid phase of spermatogenesis. They compact sperm DNA into a highly condensed, stable and inactive complex. In Hylobates lar (Lar gibbon), this protein is Protamine-2 (PRM2).